Consider the following 488-residue polypeptide: Beta-xylosidase (488 aa).

E163 functions as the Proton donor in the catalytic mechanism. Catalysis depends on E275, which acts as the Nucleophile.

This sequence belongs to the glycosyl hydrolase 39 family.

The enzyme catalyses Hydrolysis of (1-&gt;4)-beta-D-xylans, to remove successive D-xylose residues from the non-reducing termini.. In terms of biological role, beta-xylosidase is an intracellular xylan-degrading enzyme. The chain is Beta-xylosidase (xynB) from Caldicellulosiruptor saccharolyticus (Caldocellum saccharolyticum).